The chain runs to 443 residues: D(2) dopamine receptor (443 aa).

The Extracellular segment spans residues 1 to 37; sequence MDPLNLSWYDDDLERQNWSRPFNGSDGKADRPHYNYY. Asparagine 5, asparagine 17, and asparagine 23 each carry an N-linked (GlcNAc...) asparagine glycan. A helical membrane pass occupies residues 38–60; sequence ATLLTLLIAVIVFGNVLVCMAVS. Residues 61-70 are Cytoplasmic-facing; that stretch reads REKALQTTTN. A helical transmembrane segment spans residues 71 to 93; that stretch reads YLIVSLAVADLLVATLVMPWVVY. Topologically, residues 94–108 are extracellular; sequence LEVVGEWKFSRIHCD. A disulfide bridge links cysteine 107 with cysteine 182. A helical transmembrane segment spans residues 109-130; it reads IFVTLDVMMCTASILNLCAISI. Residues 131–151 are Cytoplasmic-facing; sequence DRYTAVAMPMLYNTRYSSKRR. The chain crosses the membrane as a helical span at residues 152-172; it reads VTVMISIVWVLSFTISCPLLF. The Extracellular portion of the chain corresponds to 173–188; that stretch reads GLNNADQNECIIANPA. The helical transmembrane segment at 189-213 threads the bilayer; the sequence is FVVYSSIVSFYVPFIVTLLVYIKIY. The tract at residues 211–373 is interaction with PPP1R9B; that stretch reads KIYIVLRRRR…SQQKEKKATQ (163 aa). Residues 214–373 are Cytoplasmic-facing; that stretch reads IVLRRRRKRV…SQQKEKKATQ (160 aa). A disordered region spans residues 281 to 332; sequence MEMLSSTSPPERTRYSPIPPSHHQLTLPDPSHHGLHSTPDSPAKPEKNGHAK. A compositionally biased stretch (basic and acidic residues) spans 323-332; it reads AKPEKNGHAK. The helical transmembrane segment at 374–395 threads the bilayer; that stretch reads MLAIVLGVFIICWLPFFITHIL. Over 396–409 the chain is Extracellular; the sequence is NIHCDCNIPPVLYS. Cysteines 399 and 401 form a disulfide. The helical transmembrane segment at 410–431 threads the bilayer; it reads AFTWLGYVNSAVNPIIYTTFNI. Residues 432–443 are Cytoplasmic-facing; sequence EFRKAFLKILHC. Residue cysteine 443 is the site of S-palmitoyl cysteine attachment.

Belongs to the G-protein coupled receptor 1 family. Forms homo- and heterooligomers with DRD4. The interaction with DRD4 may modulate agonist-induced downstream signaling. Interacts with CADPS and CADPS2. Interacts with GPRASP1, PPP1R9B and CLIC6. Interacts with ARRB2. Interacts with HTR2A. Interacts with GNAI2 isoform sGi2, the interaction allows the creation of an intracellular pool of DRD2 that can be released to cell surface upon agonist stimulation. Interacts with DRD1. Interacts with KCNA2. In terms of processing, palmitoylated. Palmitoylation which is required for proper localization to the plasma membrane and stability of the receptor could be carried on by ZDHHC4, ZDHHC3 and ZDHHC8. As to expression, expressed in the anterior pituitary gland.

Its subcellular location is the cell membrane. The protein resides in the golgi apparatus membrane. Functionally, dopamine receptor whose activity is mediated by G proteins which inhibit adenylyl cyclase. Positively regulates postnatal regression of retinal hyaloid vessels via suppression of VEGFR2/KDR activity, downstream of OPN5. In Homo sapiens (Human), this protein is D(2) dopamine receptor (DRD2).